Reading from the N-terminus, the 206-residue chain is Large ribosomal subunit protein uL13y (206 aa).

This sequence belongs to the universal ribosomal protein uL13 family.

This is Large ribosomal subunit protein uL13y (RPL13AB) from Arabidopsis thaliana (Mouse-ear cress).